A 66-amino-acid chain; its full sequence is uncharacterized protein (66 aa).

2 consecutive transmembrane segments (helical) span residues 6–26 and 39–59; these read KIIM…HFVG and VTFF…SILL.

It localises to the cell membrane. This is an uncharacterized protein from Bacillus subtilis (strain 168).